We begin with the raw amino-acid sequence, 130 residues long: Metastasis-suppressor KiSS-1 (130 aa).

A signal peptide spans 1–19 (MISLASWQLLLLLCVASFG). The tract at residues 52–91 (RYAESKPGAAGLRARRTSPCPPVENPTGHQRPPCATRSRL) is disordered. The cysteines at positions 71 and 85 are disulfide-linked. Tyrosine 110 is subject to Phosphotyrosine. The segment at 110–119 (YNWNSFGLRY) is essential for receptor binding and receptor activation. At tyrosine 119 the chain carries Tyrosine amide.

It belongs to the KISS1 family. As to expression, highest levels in the cecum and colon. Moderate levels present in the liver, spleen, kidney, ovary, uterus and small intestine. Low levels in the stomach, pancreas and placenta. Expressed only moderately in the placenta. Persistent expression is detected in hypothalamus throughout postnatal development, with maximum expression levels at puberty in both male and female. Hypothalamic expression is sensitive to neonatal imprinting by estrogen. Expression is higher in the hypothalamus than in the brainstem and spinal cord. In the brain, metastin-like immunoreactivity is found mainly in three groups of cells: dorsomedial hypothalamic nucleus, nucleus of the solitary tract, and caudal ventrolateral medulla.

The protein localises to the secreted. Its function is as follows. Metastasis suppressor protein. May regulate events downstream of cell-matrix adhesion, perhaps involving cytoskeletal reorganization. Generates a C-terminally amidated peptide, metastin which functions as the endogenous ligand of the G-protein coupled receptor GPR54. The receptor is also essential for normal gonadotropin-released hormone physiology and for puberty. The hypothalamic KiSS1/GPR54 system is a pivotal factor in central regulation of the gonadotropic axis at puberty and in adulthood. Intracerebroventricular administration induces an increase in serum LH and FSH levels in prepubertal male and female as well as in adult animals. The chain is Metastasis-suppressor KiSS-1 (Kiss1) from Rattus norvegicus (Rat).